The primary structure comprises 132 residues: Fluoride-specific ion channel FluC (132 aa).

Helical transmembrane passes span 6–26 (VLQL…RFIV), 41–61 (GTLV…ILMI), 73–93 (FLIV…FETY), and 104–124 (AMLN…LGIW). Na(+) contacts are provided by G80 and T83.

Belongs to the fluoride channel Fluc/FEX (TC 1.A.43) family.

The protein resides in the cell inner membrane. It carries out the reaction fluoride(in) = fluoride(out). Na(+) is not transported, but it plays an essential structural role and its presence is essential for fluoride channel function. Fluoride-specific ion channel. Important for reducing fluoride concentration in the cell, thus reducing its toxicity. In Hydrogenovibrio crunogenus (strain DSM 25203 / XCL-2) (Thiomicrospira crunogena), this protein is Fluoride-specific ion channel FluC.